Reading from the N-terminus, the 333-residue chain is Quinolinate synthase (333 aa).

2 residues coordinate iminosuccinate: His41 and Ser58. Position 103 (Cys103) interacts with [4Fe-4S] cluster. Iminosuccinate is bound by residues 129 to 131 and Ser146; that span reads YIN. Cys189 contributes to the [4Fe-4S] cluster binding site. Iminosuccinate is bound by residues 215–217 and Thr232; that span reads HPE. A [4Fe-4S] cluster-binding site is contributed by Cys282.

This sequence belongs to the quinolinate synthase family. Type 2 subfamily. The cofactor is [4Fe-4S] cluster.

The protein localises to the cytoplasm. The enzyme catalyses iminosuccinate + dihydroxyacetone phosphate = quinolinate + phosphate + 2 H2O + H(+). The protein operates within cofactor biosynthesis; NAD(+) biosynthesis; quinolinate from iminoaspartate: step 1/1. Catalyzes the condensation of iminoaspartate with dihydroxyacetone phosphate to form quinolinate. This is Quinolinate synthase from Prochlorococcus marinus (strain MIT 9303).